The following is a 329-amino-acid chain: Glycerol-3-phosphate dehydrogenase [NAD(P)+] (329 aa).

W15, H35, and K107 together coordinate NADPH. Sn-glycerol 3-phosphate is bound by residues K107, G135, and S137. Position 139 (A139) interacts with NADPH. K190, D243, S253, R254, and N255 together coordinate sn-glycerol 3-phosphate. K190 acts as the Proton acceptor in catalysis. Residue R254 coordinates NADPH. Residues L276 and E278 each contribute to the NADPH site.

Belongs to the NAD-dependent glycerol-3-phosphate dehydrogenase family.

The protein resides in the cytoplasm. The catalysed reaction is sn-glycerol 3-phosphate + NAD(+) = dihydroxyacetone phosphate + NADH + H(+). It carries out the reaction sn-glycerol 3-phosphate + NADP(+) = dihydroxyacetone phosphate + NADPH + H(+). The protein operates within membrane lipid metabolism; glycerophospholipid metabolism. Catalyzes the reduction of the glycolytic intermediate dihydroxyacetone phosphate (DHAP) to sn-glycerol 3-phosphate (G3P), the key precursor for phospholipid synthesis. The chain is Glycerol-3-phosphate dehydrogenase [NAD(P)+] from Rhodopseudomonas palustris (strain TIE-1).